The chain runs to 201 residues: uncharacterized protein (201 aa).

This is an uncharacterized protein from Cestrum yellow leaf curling virus (CmYLCV).